A 574-amino-acid polypeptide reads, in one-letter code: Sulfate adenylyltransferase (574 aa).

The segment at 1–169 is N-terminal; it reads MANTPHGGVL…LEAVNKLNHY (169 aa). The tract at residues 170–394 is catalytic; the sequence is DYVGLRYTPA…LRESSPPRAL (225 aa). Q197 provides a ligand contact to sulfate. Residues 197–200 and 291–294 contribute to the ATP site; these read QTRN and GRDH. Catalysis depends on residues T198, R199, and N200. R199 contacts sulfate. A295 is a sulfate binding site. Position 333 (V333) interacts with ATP. The segment at 395 to 574 is allosteric regulation domain; adenylyl-sulfate kinase-like; it reads QGFTIFLTGY…LESEGYFERL (180 aa). 3'-phosphoadenylyl sulfate is bound by residues 434-437, R451, 477-478, and R516; these read DTVR and IA.

It in the N-terminal section; belongs to the sulfate adenylyltransferase family. This sequence in the C-terminal section; belongs to the APS kinase family. As to quaternary structure, homohexamer. Dimer of trimers.

It is found in the cytoplasm. It carries out the reaction sulfate + ATP + H(+) = adenosine 5'-phosphosulfate + diphosphate. It participates in sulfur metabolism; hydrogen sulfide biosynthesis; sulfite from sulfate: step 1/3. Its activity is regulated as follows. Allosterically inhibited by 3'-phosphoadenosine 5'-phosphosulfate (PAPS). Functionally, catalyzes the first intracellular reaction of sulfate assimilation, forming adenosine-5'-phosphosulfate (APS) from inorganic sulfate and ATP. Plays an important role in sulfate activation as a component of the biosynthesis pathway of sulfur-containing amino acids. The protein is Sulfate adenylyltransferase of Emericella nidulans (strain FGSC A4 / ATCC 38163 / CBS 112.46 / NRRL 194 / M139) (Aspergillus nidulans).